The chain runs to 244 residues: MGNKNIKPSKENRLSILSKDKMDSFKRGSWATSSFREKSRATIQRFSSLRREHIKVDHPDKFLELKRGIYEIIQKSSSIDVDKRTKLMSNIKTMMINPFMIEGLMTSLENLDPDNKMSYSSVMILGEFDIINISDNEAAFEFINSLLKSLLLLNTRQLKLLEYSISNDLLYAHINALEYIIKNTFNVPERQLILRGQYLTPIFSDLLKYAGLTIKSNILMWNKQFIKPVSDLYTSIRLLYCVTV.

It belongs to the orthopoxvirus A47 protein family.

The protein is Protein A47 of Homo sapiens (Human).